Consider the following 628-residue polypeptide: tRNA uridine 5-carboxymethylaminomethyl modification enzyme MnmG (628 aa).

FAD contacts are provided by residues 14–19 (GAGHAG), Val126, and Ser181. 273–287 (GPRYCPSIEDKVVRF) contacts NAD(+). Gln370 provides a ligand contact to FAD.

It belongs to the MnmG family. As to quaternary structure, homodimer. Heterotetramer of two MnmE and two MnmG subunits. FAD is required as a cofactor.

It localises to the cytoplasm. Its function is as follows. NAD-binding protein involved in the addition of a carboxymethylaminomethyl (cmnm) group at the wobble position (U34) of certain tRNAs, forming tRNA-cmnm(5)s(2)U34. This is tRNA uridine 5-carboxymethylaminomethyl modification enzyme MnmG from Bacillus subtilis (strain 168).